Consider the following 426-residue polypeptide: MKLQKPKGTQDILSVAAAKWQYVEGVARETFKQYHYGEIRTPMFEHYEVISRSVGDTTDIVTKEMYDFYDKGDRHITLRPEGTAPVVRSYVENKLFAPEVQKPVKLYYIGSMFRYERPQAGRLREFHQIGVECFGSANPATDVETIAMAYHLFERLGIKGVTLHLNSLGNAASRAAYRQALIDYLSPMRETLSKDSQRRLDENPLRVLDSKEKEDKIAVANVPSILDYLDEESQAHFDAVRSMLEALAIPYVIDTNMVRGLDYYNHTIFEFITEVDQSELTICAGGRYDGLVEYFGGPATPGFGFGLGLERLLLILDKQGVELPVEEGLDVYIAVLGADANVAALALTQAIRRQGFTVERDYLGRKIKAQFKSADTFKAKVVITLGESEIKAGQAVLKHNQTRQEMTVSFDQIQTDFASIFAECVQ.

It belongs to the class-II aminoacyl-tRNA synthetase family. As to quaternary structure, homodimer.

The protein resides in the cytoplasm. The enzyme catalyses tRNA(His) + L-histidine + ATP = L-histidyl-tRNA(His) + AMP + diphosphate + H(+). This chain is Histidine--tRNA ligase, found in Streptococcus equi subsp. zooepidemicus (strain MGCS10565).